The sequence spans 537 residues: Chaperonin GroEL (537 aa).

ATP-binding positions include 31–34 (TLGP), 87–91 (DGTTT), G415, and D495.

The protein belongs to the chaperonin (HSP60) family. In terms of assembly, forms a cylinder of 14 subunits composed of two heptameric rings stacked back-to-back. Interacts with the co-chaperonin GroES.

The protein localises to the cytoplasm. The catalysed reaction is ATP + H2O + a folded polypeptide = ADP + phosphate + an unfolded polypeptide.. Functionally, together with its co-chaperonin GroES, plays an essential role in assisting protein folding. The GroEL-GroES system forms a nano-cage that allows encapsulation of the non-native substrate proteins and provides a physical environment optimized to promote and accelerate protein folding. The sequence is that of Chaperonin GroEL from Methanoregula boonei (strain DSM 21154 / JCM 14090 / 6A8).